A 95-amino-acid chain; its full sequence is Trypomastigote decay-accelerating factor (95 aa).

Belongs to the receptors of complement activation (RCA) family.

Interferes with the efficient assembly of the host C3 convertase. Could protect parasites from complement-mediated lysis by sera from a number of different species. This is Trypomastigote decay-accelerating factor from Trypanosoma cruzi.